The primary structure comprises 296 residues: D-alanine--D-alanine ligase (296 aa).

The ATP-grasp domain maps to 99 to 292 (TYRVLDGYVN…FEELVDAIIQ (194 aa)). 125-176 (GFPCVIKPRKEGSSIGVHICDNSNQLYNDLSEELKKYNEMMIQRYIEGRELT) is a binding site for ATP. Mg(2+) is bound by residues Asp247, Glu259, and Asn261.

This sequence belongs to the D-alanine--D-alanine ligase family. Requires Mg(2+) as cofactor. Mn(2+) is required as a cofactor.

The protein localises to the cytoplasm. It carries out the reaction 2 D-alanine + ATP = D-alanyl-D-alanine + ADP + phosphate + H(+). The protein operates within cell wall biogenesis; peptidoglycan biosynthesis. In terms of biological role, cell wall formation. In Pseudothermotoga lettingae (strain ATCC BAA-301 / DSM 14385 / NBRC 107922 / TMO) (Thermotoga lettingae), this protein is D-alanine--D-alanine ligase.